The primary structure comprises 554 residues: CTP synthase (554 aa).

Positions 1–265 (MTPLIFVTGG…DEIVIDQFKL (265 aa)) are amidoligase domain. Ser-13 is a binding site for CTP. UTP is bound at residue Ser-13. ATP contacts are provided by residues 14 to 19 (SLGKGI) and Asp-71. The Mg(2+) site is built by Asp-71 and Glu-139. CTP-binding positions include 146-148 (DIE), 186-191 (KTKPTQ), and Lys-222. UTP is bound by residues 186-191 (KTKPTQ) and Lys-222. Positions 292-545 (TIAVVGKYVD…VKASRARKAG (254 aa)) constitute a Glutamine amidotransferase type-1 domain. Gly-353 contributes to the L-glutamine binding site. The active-site Nucleophile; for glutamine hydrolysis is the Cys-380. L-glutamine is bound by residues 381-384 (YGMQ), Glu-404, and Arg-471. Catalysis depends on residues His-518 and Glu-520.

This sequence belongs to the CTP synthase family. In terms of assembly, homotetramer.

It carries out the reaction UTP + L-glutamine + ATP + H2O = CTP + L-glutamate + ADP + phosphate + 2 H(+). It catalyses the reaction L-glutamine + H2O = L-glutamate + NH4(+). The catalysed reaction is UTP + NH4(+) + ATP = CTP + ADP + phosphate + 2 H(+). It functions in the pathway pyrimidine metabolism; CTP biosynthesis via de novo pathway; CTP from UDP: step 2/2. Its activity is regulated as follows. Allosterically activated by GTP, when glutamine is the substrate; GTP has no effect on the reaction when ammonia is the substrate. The allosteric effector GTP functions by stabilizing the protein conformation that binds the tetrahedral intermediate(s) formed during glutamine hydrolysis. Inhibited by the product CTP, via allosteric rather than competitive inhibition. In terms of biological role, catalyzes the ATP-dependent amination of UTP to CTP with either L-glutamine or ammonia as the source of nitrogen. Regulates intracellular CTP levels through interactions with the four ribonucleotide triphosphates. This Xylella fastidiosa (strain M23) protein is CTP synthase.